Reading from the N-terminus, the 325-residue chain is Acetyl-coenzyme A carboxylase carboxyl transferase subunit alpha (325 aa).

In terms of domain architecture, CoA carboxyltransferase C-terminal spans 44–298 (QLEGRAEQLR…KTAILSNLEE (255 aa)).

Belongs to the AccA family. Acetyl-CoA carboxylase is a heterohexamer composed of biotin carboxyl carrier protein (AccB), biotin carboxylase (AccC) and two subunits each of ACCase subunit alpha (AccA) and ACCase subunit beta (AccD).

The protein resides in the cytoplasm. The enzyme catalyses N(6)-carboxybiotinyl-L-lysyl-[protein] + acetyl-CoA = N(6)-biotinyl-L-lysyl-[protein] + malonyl-CoA. The protein operates within lipid metabolism; malonyl-CoA biosynthesis; malonyl-CoA from acetyl-CoA: step 1/1. In terms of biological role, component of the acetyl coenzyme A carboxylase (ACC) complex. First, biotin carboxylase catalyzes the carboxylation of biotin on its carrier protein (BCCP) and then the CO(2) group is transferred by the carboxyltransferase to acetyl-CoA to form malonyl-CoA. The protein is Acetyl-coenzyme A carboxylase carboxyl transferase subunit alpha of Acaryochloris marina (strain MBIC 11017).